We begin with the raw amino-acid sequence, 979 residues long: Putative disease resistance protein RGA1 (979 aa).

An NB-ARC domain is found at 143 to 437 (GSVLTEPQVY…MAHGFLLSKG (295 aa)). 182–189 (GMGGLGKT) is a binding site for ATP. 12 LRR repeats span residues 524–547 (FVSLRVLNLRNSNLNQLPSSIGDL), 549–570 (HLRYLDLSGNFRIRNLPKRLCK), 571–594 (LQNLQTLDLHYCDSLSCLPKQTSK), 595–619 (LGSLRNLLLDGCSLTSTPPRIGLLT), 637–661 (LGELKNLNLYGSISITKLDRVKKDT), 748–773 (LPCLESLELHTGSADVEYVEDNVHPG), 823–841 (VKTLKVIVTDATVLRSISN), 842–866 (LRALTSLDISDNVEATSLPEEMFKS), 868–890 (ANLKYLKISFFRNLKELPTSLAS), 891–915 (LNALKSLKFEFCDALESLPEEGVKG), 917–939 (TSLTELSVSNCMMLKCLPEGLQH), and 940–965 (LTALTTLTITQCPIVFKRCERGIGED).

Belongs to the disease resistance NB-LRR family.

In terms of biological role, disease resistance protein. Resistance proteins guard the plant against pathogens that contain an appropriate avirulence protein via a direct or indirect interaction with this avirulence protein. That triggers a defense system which restricts the pathogen growth. In Solanum bulbocastanum (Wild potato), this protein is Putative disease resistance protein RGA1 (RGA1).